Reading from the N-terminus, the 86-residue chain is MAKEELLEMEGVVNEVLPDTRFRVTLENGVEVQAYASGKMRKHRIRILAGDKVSVELSPYDLTKARISFRHKDERPAGAPSQFRRR.

The S1-like domain occupies M1 to K72.

Belongs to the IF-1 family. In terms of assembly, component of the 30S ribosomal translation pre-initiation complex which assembles on the 30S ribosome in the order IF-2 and IF-3, IF-1 and N-formylmethionyl-tRNA(fMet); mRNA recruitment can occur at any time during PIC assembly.

The protein resides in the cytoplasm. One of the essential components for the initiation of protein synthesis. Stabilizes the binding of IF-2 and IF-3 on the 30S subunit to which N-formylmethionyl-tRNA(fMet) subsequently binds. Helps modulate mRNA selection, yielding the 30S pre-initiation complex (PIC). Upon addition of the 50S ribosomal subunit IF-1, IF-2 and IF-3 are released leaving the mature 70S translation initiation complex. This Aromatoleum aromaticum (strain DSM 19018 / LMG 30748 / EbN1) (Azoarcus sp. (strain EbN1)) protein is Translation initiation factor IF-1 2.